Reading from the N-terminus, the 128-residue chain is Large ribosomal subunit protein bL17 (128 aa).

Belongs to the bacterial ribosomal protein bL17 family. Part of the 50S ribosomal subunit. Contacts protein L32.

This is Large ribosomal subunit protein bL17 from Ehrlichia ruminantium (strain Gardel).